Reading from the N-terminus, the 604-residue chain is Elongation factor 4 (604 aa).

Residues 7–189 (SKIRNFCIIA…SIVHLVPPPS (183 aa)) enclose the tr-type G domain. GTP contacts are provided by residues 19–24 (DHGKST) and 136–139 (NKID).

This sequence belongs to the TRAFAC class translation factor GTPase superfamily. Classic translation factor GTPase family. LepA subfamily.

The protein resides in the cell inner membrane. It catalyses the reaction GTP + H2O = GDP + phosphate + H(+). In terms of biological role, required for accurate and efficient protein synthesis under certain stress conditions. May act as a fidelity factor of the translation reaction, by catalyzing a one-codon backward translocation of tRNAs on improperly translocated ribosomes. Back-translocation proceeds from a post-translocation (POST) complex to a pre-translocation (PRE) complex, thus giving elongation factor G a second chance to translocate the tRNAs correctly. Binds to ribosomes in a GTP-dependent manner. This chain is Elongation factor 4, found in Synechococcus elongatus (strain ATCC 33912 / PCC 7942 / FACHB-805) (Anacystis nidulans R2).